Reading from the N-terminus, the 1357-residue chain is DNA-directed RNA polymerase subunit beta (1357 aa).

It belongs to the RNA polymerase beta chain family. The RNAP catalytic core consists of 2 alpha, 1 beta, 1 beta' and 1 omega subunit. When a sigma factor is associated with the core the holoenzyme is formed, which can initiate transcription.

It carries out the reaction RNA(n) + a ribonucleoside 5'-triphosphate = RNA(n+1) + diphosphate. Functionally, DNA-dependent RNA polymerase catalyzes the transcription of DNA into RNA using the four ribonucleoside triphosphates as substrates. The chain is DNA-directed RNA polymerase subunit beta from Pseudomonas aeruginosa (strain ATCC 15692 / DSM 22644 / CIP 104116 / JCM 14847 / LMG 12228 / 1C / PRS 101 / PAO1).